Here is a 321-residue protein sequence, read N- to C-terminus: Probable nucleosome assembly protein (321 aa).

A compositionally biased stretch (acidic residues) spans Glu-272 to Glu-298. The tract at residues Glu-272–Gln-321 is disordered. A compositionally biased stretch (low complexity) spans Gln-311–Gln-321.

The protein belongs to the nucleosome assembly protein (NAP) family.

The protein localises to the nucleus. May modulate chromatin structure by regulation of histone octamer formation. This Dictyostelium discoideum (Social amoeba) protein is Probable nucleosome assembly protein (nap1).